We begin with the raw amino-acid sequence, 575 residues long: Sorting nexin-41 (575 aa).

The tract at residues T30–P66 is disordered. The span at P41–A55 shows a compositional bias: polar residues. The 121-residue stretch at Q101–W221 folds into the PX domain. The a 1,2-diacyl-sn-glycero-3-phospho-(1D-myo-inositol-3-phosphate) site is built by R139, S141, K165, and R188. Positions F467–V486 are disordered. Positions S469–S484 are enriched in polar residues.

Belongs to the sorting nexin family.

Its subcellular location is the endosome membrane. It is found in the endomembrane system. In terms of biological role, may be required for cytoplasm to vacuole transport (Cvt) and pexophagy. The polypeptide is Sorting nexin-41 (SNX41) (Kluyveromyces lactis (strain ATCC 8585 / CBS 2359 / DSM 70799 / NBRC 1267 / NRRL Y-1140 / WM37) (Yeast)).